Here is a 310-residue protein sequence, read N- to C-terminus: Transcriptional regulator NRG1 (310 aa).

The tract at residues 85 to 131 is disordered; it reads YYMGPPAQHRLPTPPPYPMSSPTTATAATPLSQQSPHLQPQQTLQQP. Low complexity predominate over residues 104–131; sequence SSPTTATAATPLSQQSPHLQPQQTLQQP. 2 C2H2-type zinc fingers span residues 228 to 250 and 256 to 280; these read HVCK…NRIH and HQCP…YKTH.

The protein localises to the nucleus. In terms of biological role, transcriptional repressor that binds NRG1 response elements (NRE) of target promoters. Involved in regulation of chlamydospore formation, hyphal growth, virulence, and stress response. Plays a key role in regulating true hyphal growth, but does not regulate pseudohyphal growth in the same fashion. Directs transcriptional repression of a subset of filament-specific genes such as HWP1, HYR1, ALS8, HWP1, or ECE1; via the TUP1 pathway. Functions with UME6 in a negative feedback loop to control the level and duration of filament-specific gene expression in response to inducing conditions. Plays a key role in biofilm formation and dispersion. Also plays the role of a negative regulator of virulence in mice models. Required for the expression of the cell wall genes RBR1. The chain is Transcriptional regulator NRG1 (NRG1) from Candida albicans (strain SC5314 / ATCC MYA-2876) (Yeast).